Reading from the N-terminus, the 97-residue chain is Small ribosomal subunit protein bS20 (97 aa).

Belongs to the bacterial ribosomal protein bS20 family.

In terms of biological role, binds directly to 16S ribosomal RNA. The chain is Small ribosomal subunit protein bS20 from Prochlorococcus marinus (strain AS9601).